The chain runs to 133 residues: Small ribosomal subunit protein uS8 (133 aa).

The protein belongs to the universal ribosomal protein uS8 family. As to quaternary structure, part of the 30S ribosomal subunit. Contacts proteins S5 and S12.

In terms of biological role, one of the primary rRNA binding proteins, it binds directly to 16S rRNA central domain where it helps coordinate assembly of the platform of the 30S subunit. This Prochlorococcus marinus (strain AS9601) protein is Small ribosomal subunit protein uS8.